Here is a 93-residue protein sequence, read N- to C-terminus: Phosphoribosyl-ATP pyrophosphatase (93 aa).

The protein belongs to the PRA-PH family.

Its subcellular location is the cytoplasm. The catalysed reaction is 1-(5-phospho-beta-D-ribosyl)-ATP + H2O = 1-(5-phospho-beta-D-ribosyl)-5'-AMP + diphosphate + H(+). It functions in the pathway amino-acid biosynthesis; L-histidine biosynthesis; L-histidine from 5-phospho-alpha-D-ribose 1-diphosphate: step 2/9. This chain is Phosphoribosyl-ATP pyrophosphatase, found in Mycolicibacterium gilvum (strain PYR-GCK) (Mycobacterium gilvum (strain PYR-GCK)).